A 206-amino-acid polypeptide reads, in one-letter code: Outer-membrane lipoprotein carrier protein (206 aa).

The first 20 residues, 1-20 (MRLIRMLLPVLALTTLTAHA), serve as a signal peptide directing secretion.

This sequence belongs to the LolA family. Monomer.

The protein localises to the periplasm. Functionally, participates in the translocation of lipoproteins from the inner membrane to the outer membrane. Only forms a complex with a lipoprotein if the residue after the N-terminal Cys is not an aspartate (The Asp acts as a targeting signal to indicate that the lipoprotein should stay in the inner membrane). This is Outer-membrane lipoprotein carrier protein from Pseudomonas fluorescens (strain Pf0-1).